Reading from the N-terminus, the 500-residue chain is NAD(P)H-quinone oxidoreductase chain 4, chloroplastic (500 aa).

14 helical membrane-spanning segments follow: residues 4 to 24 (FPWL…IFFL), 37 to 57 (IFIC…HFQL), 87 to 107 (IGPI…AWPV), 113 to 130 (LFHF…GSFS), 134 to 154 (LLLF…LLSM), 167 to 187 (FILY…GIGL), 208 to 228 (ALEI…SPII), 242 to 262 (HYST…YGLV), 272 to 292 (AHSI…IYAA), 305 to 325 (IAYS…SITD), 330 to 350 (GAIL…FLAG), 386 to 406 (LALP…GIIT), 416 to 436 (ILIT…SLSM), and 462 to 482 (LFVL…PDFV).

This sequence belongs to the complex I subunit 4 family.

It localises to the plastid. The protein localises to the chloroplast thylakoid membrane. The catalysed reaction is a plastoquinone + NADH + (n+1) H(+)(in) = a plastoquinol + NAD(+) + n H(+)(out). It carries out the reaction a plastoquinone + NADPH + (n+1) H(+)(in) = a plastoquinol + NADP(+) + n H(+)(out). The chain is NAD(P)H-quinone oxidoreductase chain 4, chloroplastic from Vitis vinifera (Grape).